A 432-amino-acid polypeptide reads, in one-letter code: MLAGRAARTCALLALCLLGSRAQDFGPTRFICTSVPVDADMCAASVAAGGAEELRSNVLQLRETVLQQKETILSQKETIRELTTKLGRCESQSTLDAGPGEARSGGGRKQPGSGKNTMGDLSRTPASETLSQLGQTLQSLKTRLENLEQYSRLNSSSQTNSLKDLLQSKIDDLERQVLSRVNTLEEGKGGPKNDTEERAKIESALTSLHQRISELEKGQKDNRPGDKFQLTFPLRTNYMYAKVKKSLPEMYAFTVCMWLKSSAAPGVGTPFSYAVPGQANELVLIEWGNNPMEILINDKVAKLPFVINDGKWHHICVTWTTRDGVWEAYQDGTQGGNGENLAPYHPIKPQGVLVLGQEQDTLGGGFDATQAFVGELAHFNIWDRKLTPGEVYNLATCSSKALSGNVIAWAESQIEIFGGATKWTFEACRQIN.

Positions 1–22 (MLAGRAARTCALLALCLLGSRA) are cleaved as a signal peptide. Residues 90–128 (ESQSTLDAGPGEARSGGGRKQPGSGKNTMGDLSRTPASE) form a disordered region. Residues Asn154 and Asn193 are each glycosylated (N-linked (GlcNAc...) asparagine). In terms of domain architecture, Pentraxin (PTX) spans 226–428 (DKFQLTFPLR…GATKWTFEAC (203 aa)). A disulfide bridge links Cys256 with Cys316. Residues Asn280, Glu358, Gln359, Asp360, and Gln370 each contribute to the Ca(2+) site.

Homooligomer or heterooligomer (probably pentamer) with neuronal pentraxin receptor (NPTXR). It depends on Ca(2+) as a cofactor. Post-translationally, glycosylated. Cerebellum, hippocampus and cerebral cortex.

It localises to the secreted. It is found in the cytoplasmic vesicle. The protein resides in the secretory vesicle. The protein localises to the endoplasmic reticulum. May be involved in mediating uptake of synaptic material during synapse remodeling or in mediating the synaptic clustering of AMPA glutamate receptors at a subset of excitatory synapses. This is Neuronal pentraxin-1 (Nptx1) from Rattus norvegicus (Rat).